The sequence spans 164 residues: Photosystem II extrinsic protein V (164 aa).

Residues 1-27 form the signal peptide; it reads MALKSKFLVGSILATFILNGFSSPAQA. Cys64, Cys67, His68, and His119 together coordinate heme c.

The protein belongs to the cytochrome c family. PsbV subfamily. PSII is composed of 1 copy each of membrane proteins PsbA, PsbB, PsbC, PsbD, PsbE, PsbF, PsbH, PsbI, PsbJ, PsbK, PsbL, PsbM, PsbT, PsbY, PsbZ, Psb30/Ycf12, at least 3 peripheral proteins of the oxygen-evolving complex and a large number of cofactors. It forms dimeric complexes. Heme c is required as a cofactor.

It is found in the plastid. Its subcellular location is the chloroplast thylakoid membrane. Its function is as follows. One of the extrinsic, lumenal subunits of photosystem II (PSII). PSII is a light-driven water plastoquinone oxidoreductase, using light energy to abstract electrons from H(2)O, generating a proton gradient subsequently used for ATP formation. The extrinsic proteins stabilize the structure of photosystem II oxygen-evolving complex (OEC), the ion environment of oxygen evolution and protect the OEC against heat-induced inactivation. The polypeptide is Photosystem II extrinsic protein V (Emiliania huxleyi (Coccolithophore)).